Consider the following 162-residue polypeptide: Protein NrdI (162 aa).

The protein belongs to the NrdI family.

In terms of biological role, probably involved in ribonucleotide reductase function. This chain is Protein NrdI, found in Streptococcus pyogenes serotype M1.